The primary structure comprises 733 residues: Phosphoribosylformylglycinamidine synthase subunit PurL (733 aa).

H42 is a catalytic residue. ATP contacts are provided by Y45 and K84. Position 86 (E86) interacts with Mg(2+). Substrate-binding positions include 87 to 90 and R109; that span reads SHNH. The Proton acceptor role is filled by H88. D110 is a binding site for Mg(2+). Q233 is a binding site for substrate. Residue D261 coordinates Mg(2+). 305–307 contacts substrate; it reads ESQ. 2 residues coordinate ATP: D489 and G526. N527 serves as a coordination point for Mg(2+). A substrate-binding site is contributed by S529.

It belongs to the FGAMS family. In terms of assembly, monomer. Part of the FGAM synthase complex composed of 1 PurL, 1 PurQ and 2 PurS subunits.

It is found in the cytoplasm. The enzyme catalyses N(2)-formyl-N(1)-(5-phospho-beta-D-ribosyl)glycinamide + L-glutamine + ATP + H2O = 2-formamido-N(1)-(5-O-phospho-beta-D-ribosyl)acetamidine + L-glutamate + ADP + phosphate + H(+). Its pathway is purine metabolism; IMP biosynthesis via de novo pathway; 5-amino-1-(5-phospho-D-ribosyl)imidazole from N(2)-formyl-N(1)-(5-phospho-D-ribosyl)glycinamide: step 1/2. In terms of biological role, part of the phosphoribosylformylglycinamidine synthase complex involved in the purines biosynthetic pathway. Catalyzes the ATP-dependent conversion of formylglycinamide ribonucleotide (FGAR) and glutamine to yield formylglycinamidine ribonucleotide (FGAM) and glutamate. The FGAM synthase complex is composed of three subunits. PurQ produces an ammonia molecule by converting glutamine to glutamate. PurL transfers the ammonia molecule to FGAR to form FGAM in an ATP-dependent manner. PurS interacts with PurQ and PurL and is thought to assist in the transfer of the ammonia molecule from PurQ to PurL. The sequence is that of Phosphoribosylformylglycinamidine synthase subunit PurL from Moorella thermoacetica (strain ATCC 39073 / JCM 9320).